The primary structure comprises 566 residues: Glucose-6-phosphate isomerase (566 aa).

E374 acts as the Proton donor in catalysis. Active-site residues include H405 and K529.

The protein belongs to the GPI family.

Its subcellular location is the cytoplasm. It carries out the reaction alpha-D-glucose 6-phosphate = beta-D-fructose 6-phosphate. The protein operates within carbohydrate biosynthesis; gluconeogenesis. Its pathway is carbohydrate degradation; glycolysis; D-glyceraldehyde 3-phosphate and glycerone phosphate from D-glucose: step 2/4. Catalyzes the reversible isomerization of glucose-6-phosphate to fructose-6-phosphate. This chain is Glucose-6-phosphate isomerase, found in Bifidobacterium longum (strain NCC 2705).